Reading from the N-terminus, the 1054-residue chain is DNA-directed RNA polymerase subunit beta' (1054 aa).

Mg(2+) is bound by residues Asp383, Asp385, and Asp387. Zn(2+) contacts are provided by Cys752, Cys826, Cys833, and Cys836.

Belongs to the RNA polymerase beta' chain family. As to quaternary structure, the RNAP catalytic core consists of 2 alpha, 1 beta, 1 beta' and 1 omega subunit. When a sigma factor is associated with the core the holoenzyme is formed, which can initiate transcription. Mg(2+) is required as a cofactor. It depends on Zn(2+) as a cofactor.

It carries out the reaction RNA(n) + a ribonucleoside 5'-triphosphate = RNA(n+1) + diphosphate. Functionally, DNA-dependent RNA polymerase catalyzes the transcription of DNA into RNA using the four ribonucleoside triphosphates as substrates. The sequence is that of DNA-directed RNA polymerase subunit beta' from Weissella paramesenteroides (Leuconostoc paramesenteroides).